A 469-amino-acid polypeptide reads, in one-letter code: Argininosuccinate lyase (469 aa).

This sequence belongs to the lyase 1 family. Argininosuccinate lyase subfamily.

Its subcellular location is the cytoplasm. The enzyme catalyses 2-(N(omega)-L-arginino)succinate = fumarate + L-arginine. Its pathway is amino-acid biosynthesis; L-arginine biosynthesis; L-arginine from L-ornithine and carbamoyl phosphate: step 3/3. The polypeptide is Argininosuccinate lyase (Novosphingobium aromaticivorans (strain ATCC 700278 / DSM 12444 / CCUG 56034 / CIP 105152 / NBRC 16084 / F199)).